The sequence spans 119 residues: uncharacterized protein (119 aa).

The ABC transmembrane type-1 domain occupies methionine 1–leucine 112. 2 helical membrane-spanning segments follow: residues valine 51 to phenylalanine 73 and phenylalanine 91 to valine 111.

This sequence belongs to the binding-protein-dependent transport system permease family. CysTW subfamily.

It is found in the cell membrane. This is an uncharacterized protein from Haemophilus influenzae (strain ATCC 51907 / DSM 11121 / KW20 / Rd).